A 564-amino-acid chain; its full sequence is Transmembrane anterior posterior transformation protein 1 (564 aa).

The segment covering 1 to 10 (MAGVCDAAAP) has biased composition (low complexity). The tract at residues 1–55 (MAGVCDAAAPGEGGGGGADGPERTGRGEAEQPGGGGHGPAPQHTETLGFYESDRR) is disordered. Position 2 is an N-acetylalanine (alanine 2). A compositionally biased stretch (basic and acidic residues) spans 20–29 (GPERTGRGEA). Helical transmembrane passes span 108 to 128 (LMFFGIFLCLDAFLYVFTLLP), 154 to 176 (PAQVCDILKGVILVICYFMMHYV), 233 to 253 (IGVIPHFFMAVLYVFLHAILI), 332 to 352 (LWVLFPDVCMVIASEIAVDIV), 400 to 420 (GFIPLPLAVLLIRVVTSSIKV), and 429 to 449 (VILFYFGLISLKILNSIVLLG). Positions 464–546 (LFNPPPASTP…ENSELKHRSS (83 aa)) are disordered. Positions 473-489 (PGKPSSKSQSKGKPSQG) are enriched in low complexity. Polar residues-rich tracts occupy residues 490 to 505 (LSTEENLSASVTSQPG) and 516 to 525 (VTSNSDQFLT). Serine 520 carries the post-translational modification Phosphoserine. A Phosphothreonine modification is found at threonine 526. Over residues 532–546 (KDITQENSELKHRSS) the composition is skewed to basic and acidic residues.

Belongs to the TAPT1 family. Ubiquitous. Expressed throughout embryo.

The protein resides in the cytoplasm. It localises to the cytoskeleton. The protein localises to the microtubule organizing center. Its subcellular location is the centrosome. It is found in the cilium basal body. The protein resides in the membrane. Functionally, plays a role in primary cilia formation. May act as a downstream effector of HOXC8 possibly by transducing or transmitting extracellular information required for axial skeletal patterning during development. May be involved in cartilage and bone development. May play a role in the differentiation of cranial neural crest cells. The polypeptide is Transmembrane anterior posterior transformation protein 1 (Tapt1) (Mus musculus (Mouse)).